The sequence spans 213 residues: Holliday junction branch migration complex subunit RuvA (213 aa).

Residues 1–69 (MISYLKGIVA…EEIPLLYGFS (69 aa)) are domain I. The domain II stretch occupies residues 70-148 (SPAERDLFRH…EWRKSAGFFV (79 aa)). The interval 149–158 (ATEGPAPGIL) is flexible linker. The interval 158-213 (LEEVQMTLFALGYTAHEVSHALHVVSEDIGLPKDAYVEDWIKQAIAHLSSSEQVSH) is domain III.

It belongs to the RuvA family. In terms of assembly, homotetramer. Forms an RuvA(8)-RuvB(12)-Holliday junction (HJ) complex. HJ DNA is sandwiched between 2 RuvA tetramers; dsDNA enters through RuvA and exits via RuvB. An RuvB hexamer assembles on each DNA strand where it exits the tetramer. Each RuvB hexamer is contacted by two RuvA subunits (via domain III) on 2 adjacent RuvB subunits; this complex drives branch migration. In the full resolvosome a probable DNA-RuvA(4)-RuvB(12)-RuvC(2) complex forms which resolves the HJ.

Its subcellular location is the cytoplasm. The RuvA-RuvB-RuvC complex processes Holliday junction (HJ) DNA during genetic recombination and DNA repair, while the RuvA-RuvB complex plays an important role in the rescue of blocked DNA replication forks via replication fork reversal (RFR). RuvA specifically binds to HJ cruciform DNA, conferring on it an open structure. The RuvB hexamer acts as an ATP-dependent pump, pulling dsDNA into and through the RuvAB complex. HJ branch migration allows RuvC to scan DNA until it finds its consensus sequence, where it cleaves and resolves the cruciform DNA. The protein is Holliday junction branch migration complex subunit RuvA of Nostoc sp. (strain PCC 7120 / SAG 25.82 / UTEX 2576).